The following is a 617-amino-acid chain: Zinc finger protein 221 (617 aa).

In terms of domain architecture, KRAB spans 30–100; the sequence is VTFKDVAVVF…KTTSQREGNS (71 aa). 3 consecutive C2H2-type zinc fingers follow at residues 170 to 192, 198 to 220, and 226 to 248; these read YRCN…QQSH, HTCG…QRVH, and YKCD…QRVH. A C2H2-type 4; degenerate zinc finger spans residues 254-276; the sequence is FKCGQCGKGFHSRSALNVHCKLH. 11 consecutive C2H2-type zinc fingers follow at residues 282-304, 310-332, 338-360, 366-388, 394-416, 422-444, 450-472, 478-500, 506-528, 534-556, and 562-584; these read YNCE…QRIH, FKCD…SMVH, FRCD…SMVH, YKCE…QMVH, YNCK…QQVH, FKCE…QRSH, YNCE…QRVH, YNCK…QRLH, FKCE…QTCH, and YKCE…QRVH.

The protein belongs to the krueppel C2H2-type zinc-finger protein family.

The protein resides in the nucleus. In terms of biological role, may be involved in transcriptional regulation. The chain is Zinc finger protein 221 (ZNF221) from Homo sapiens (Human).